A 287-amino-acid chain; its full sequence is NAD-dependent protein deacylase sir-2.3 (287 aa).

Positions 10–287 constitute a Deacetylase sirtuin-type domain; that stretch reads TELCENSLKK…YRISDVLKEM (278 aa). NAD(+) is bound by residues 35–55 and 116–119; these read GAGI…VGLY and QNVD. The Proton acceptor role is filled by histidine 134. Residues cysteine 142, cysteine 145, cysteine 196, and cysteine 199 each coordinate Zn(2+). Residues 236-238, 262-264, and isoleucine 280 each bind NAD(+); these read GTS and NIG.

The protein belongs to the sirtuin family. Class II subfamily. Interacts with pyc-1, pcca-1 and mccc-1. Zn(2+) is required as a cofactor. As to expression, ubiquitously expressed with high expression in the pharynx, body wall muscles and gonad. Strong expression in a subset of non-neuronal cells in the head.

It is found in the mitochondrion matrix. Its subcellular location is the mitochondrion. The enzyme catalyses N(6)-acetyl-L-lysyl-[protein] + NAD(+) + H2O = 2''-O-acetyl-ADP-D-ribose + nicotinamide + L-lysyl-[protein]. NAD-dependent protein deacylase. Catalyzes the NAD-dependent hydrolysis of acyl groups from lysine residues. Plays a role in oxidative stress resistance. Might promote neuronal cell death under ischemic conditions and cell death in touch neurons induced by mec-4 channel hyperactivation, possibly downstream of the insulin-like receptor daf-2. Might attenuate the reactive oxygen species (ROS) scavenging system, that eliminates ROS in ischemic conditions, under dietary deprivation and when glycolysis is blocked. The polypeptide is NAD-dependent protein deacylase sir-2.3 (sir-2.3) (Caenorhabditis elegans).